Here is a 250-residue protein sequence, read N- to C-terminus: Cyclopentanol dehydrogenase (250 aa).

Residues M18, D37, D63, V64, N90, Y155, K159, I188, T190, and T193 each contribute to the NAD(+) site. Y155 acts as the Proton acceptor in catalysis.

This sequence belongs to the short-chain dehydrogenases/reductases (SDR) family.

The enzyme catalyses cyclopentanol + NAD(+) = cyclopentanone + NADH + H(+). It catalyses the reaction cyclohexanol + NAD(+) = cyclohexanone + NADH + H(+). It participates in alcohol metabolism; cyclopentanol degradation; 5-valerolactone from cyclopentanol: step 1/2. Catalyzes the oxidation of cyclopentanol to cyclopentanone and cyclohexanol to cyclohexanone. The activity toward cyclohexanol is 60% that of cyclopentanol. The polypeptide is Cyclopentanol dehydrogenase (Comamonas sp. (strain NCIMB 9872)).